The chain runs to 627 residues: Translation factor GUF1, mitochondrial (627 aa).

The N-terminal 16 residues, 1 to 16 (MSLAWSAGRAWSRQSY), are a transit peptide targeting the mitochondrion. The tr-type G domain occupies 40–221 (ERYRNFCIVA…AVIERIPHPV (182 aa)). Residues 49–56 (AHIDHGKS), 114–118 (DTPGH), and 168–171 (NKID) contribute to the GTP site.

The protein belongs to the TRAFAC class translation factor GTPase superfamily. Classic translation factor GTPase family. LepA subfamily.

Its subcellular location is the mitochondrion inner membrane. It carries out the reaction GTP + H2O = GDP + phosphate + H(+). Functionally, promotes mitochondrial protein synthesis. May act as a fidelity factor of the translation reaction, by catalyzing a one-codon backward translocation of tRNAs on improperly translocated ribosomes. Binds to mitochondrial ribosomes in a GTP-dependent manner. The chain is Translation factor GUF1, mitochondrial from Fusarium vanettenii (strain ATCC MYA-4622 / CBS 123669 / FGSC 9596 / NRRL 45880 / 77-13-4) (Fusarium solani subsp. pisi).